The following is a 657-amino-acid chain: Probable alpha-galactosidase D (657 aa).

The N-terminal stretch at 1–16 (MLPKIFYLSLLPAALG) is a signal peptide. Residues Asn-47 and Asn-91 are each glycosylated (N-linked (GlcNAc...) asparagine). A disulfide bond links Cys-124 and Cys-157. Asp-155 (nucleophile) is an active-site residue. N-linked (GlcNAc...) asparagine glycosylation is found at Asn-182 and Asn-191. 200–204 (EWGID) lines the substrate pocket. Asp-222 acts as the Proton donor in catalysis. Residues Asn-291, Asn-438, Asn-460, Asn-505, Asn-539, Asn-543, and Asn-582 are each glycosylated (N-linked (GlcNAc...) asparagine).

This sequence belongs to the glycosyl hydrolase 27 family.

Its subcellular location is the secreted. It carries out the reaction Hydrolysis of terminal, non-reducing alpha-D-galactose residues in alpha-D-galactosides, including galactose oligosaccharides, galactomannans and galactolipids.. In terms of biological role, hydrolyzes a variety of simple alpha-D-galactoside as well as more complex molecules such as oligosaccharides and polysaccharides. The protein is Probable alpha-galactosidase D (aglD) of Aspergillus oryzae (strain ATCC 42149 / RIB 40) (Yellow koji mold).